An 86-amino-acid polypeptide reads, in one-letter code: Long neurotoxin homolog (86 aa).

The N-terminal stretch at 1–21 (MKTLLLTLVVVTIVCLALGYT) is a signal peptide. 5 cysteine pairs are disulfide-bonded: cysteine 24-cysteine 45, cysteine 27-cysteine 32, cysteine 38-cysteine 63, cysteine 67-cysteine 78, and cysteine 79-cysteine 84.

The protein belongs to the three-finger toxin family. Ancestral subfamily. Orphan group II sub-subfamily. Expressed by the venom gland.

The protein resides in the secreted. In terms of biological role, binds with low affinity and weakly inhibits muscle nicotinic acetylcholine receptor (nAChR). The protein is Long neurotoxin homolog of Naja atra (Chinese cobra).